A 141-amino-acid chain; its full sequence is Nucleoside diphosphate kinase (141 aa).

Lys10, Phe58, Arg86, Thr92, Arg103, and Asn113 together coordinate ATP. Residue His116 is the Pros-phosphohistidine intermediate of the active site.

This sequence belongs to the NDK family. Homotetramer. Mg(2+) is required as a cofactor.

It localises to the cytoplasm. The enzyme catalyses a 2'-deoxyribonucleoside 5'-diphosphate + ATP = a 2'-deoxyribonucleoside 5'-triphosphate + ADP. It catalyses the reaction a ribonucleoside 5'-diphosphate + ATP = a ribonucleoside 5'-triphosphate + ADP. In terms of biological role, major role in the synthesis of nucleoside triphosphates other than ATP. The ATP gamma phosphate is transferred to the NDP beta phosphate via a ping-pong mechanism, using a phosphorylated active-site intermediate. This is Nucleoside diphosphate kinase from Ehrlichia canis (strain Jake).